A 250-amino-acid polypeptide reads, in one-letter code: Triosephosphate isomerase, cytosolic (250 aa).

Asn1 and Lys3 together coordinate substrate. Catalysis depends on His87, which acts as the Electrophile. Glu160 (proton acceptor) is an active-site residue.

The protein belongs to the triosephosphate isomerase family. In terms of assembly, homodimer.

The protein localises to the cytoplasm. It carries out the reaction D-glyceraldehyde 3-phosphate = dihydroxyacetone phosphate. It functions in the pathway carbohydrate biosynthesis; gluconeogenesis. Its pathway is carbohydrate degradation; glycolysis; D-glyceraldehyde 3-phosphate from glycerone phosphate: step 1/1. The sequence is that of Triosephosphate isomerase, cytosolic (TPI1) from Gracilaria gracilis (Red alga).